Reading from the N-terminus, the 1431-residue chain is Stabilin-2 (1431 aa).

Over 1 to 1322 the chain is Extracellular; sequence SLPSLLTRLE…PPTAATAAHS (1322 aa). An FAS1 domain is found at 2–130; sequence LPSLLTRLEQ…GVIHGLEKVL (129 aa). Asn-112 and Asn-140 each carry an N-linked (GlcNAc...) asparagine glycan. The Laminin EGF-like 1 domain occupies 207–272; the sequence is PQCQACPGRG…CSCVHGRCSQ (66 aa). Disulfide bonds link Cys-212/Cys-226, Cys-220/Cys-236, Cys-238/Cys-247, Cys-259/Cys-270, Cys-263/Cys-280, Cys-282/Cys-291, Cys-300/Cys-310, Cys-304/Cys-320, Cys-322/Cys-333, Cys-339/Cys-352, Cys-346/Cys-362, Cys-364/Cys-375, Cys-381/Cys-394, Cys-388/Cys-404, Cys-406/Cys-417, Cys-423/Cys-436, Cys-430/Cys-446, and Cys-448/Cys-459. N-linked (GlcNAc...) asparagine glycosylation is found at Asn-231 and Asn-243. 4 EGF-like domains span residues 296–334, 335–376, 377–418, and 419–460; these read TTDNCNGTCHTSANCLLDPDGKASCKCAAGFRGNGTVCT, AINA…IVCL, EINP…KVCS, and LINV…IVCR. N-linked (GlcNAc...) asparagine glycosylation is present at Asn-301. Asn-329 carries N-linked (GlcNAc...) asparagine glycosylation. Asn-437 carries N-linked (GlcNAc...) asparagine glycosylation. 2 FAS1 domains span residues 460 to 588 and 604 to 745; these read RGSI…DKLL and VLQN…DCLL. An N-linked (GlcNAc...) asparagine glycan is attached at Asn-607. One can recognise a Laminin EGF-like 2 domain in the interval 822 to 887; sequence PDCQACPGGP…SCSEHGQCDE (66 aa). Intrachain disulfides connect Cys-827/Cys-841, Cys-835/Cys-851, Cys-853/Cys-862, Cys-874/Cys-885, Cys-879/Cys-895, and Cys-897/Cys-906. Asn-858 carries N-linked (GlcNAc...) asparagine glycosylation. N-linked (GlcNAc...) asparagine glycosylation is present at Asn-929. EGF-like domains are found at residues 947 to 987 and 988 to 1030; these read VVDF…YSCI and EIDP…VDCE. 8 disulfide bridges follow: Cys-951-Cys-964, Cys-958-Cys-973, Cys-975-Cys-986, Cys-992-Cys-1006, Cys-1000-Cys-1016, Cys-1018-Cys-1029, Cys-1085-Cys-1154, and Cys-1109-Cys-1130. A Link domain is found at 1063–1156; the sequence is GVFHLRSPLG…SEMWDVFCYR (94 aa). N-linked (GlcNAc...) asparagine glycans are attached at residues Asn-1145, Asn-1161, Asn-1233, Asn-1249, and Asn-1258. The FAS1 4 domain occupies 1176–1310; the sequence is SGNLLQVLMS…GILHIISEPL (135 aa). A helical transmembrane segment spans residues 1323–1343; it reads GLGTGIFCAVVLVTGAIALAA. Over 1344 to 1431 the chain is Cytoplasmic; it reads YSYFRLKQRT…QQATTVTVPR (88 aa). The interaction with TMSB4X stretch occupies residues 1368–1378; sequence WLLASSSPRIS.

Interacts with GULP1, heparin, alpha-M/beta-2 integrin (ITGAM and ITGB2), and thymosin beta 4 (TMSB4X). Glycosylated. Post-translationally, proteolytically processed to yield a 175 kDa protein. As to expression, initially expressed in all vascular cells, including those of sinusoidal-like structures, vitellin veins, and hepatic veins or sinus venosus, in E13.5 fetal liver. The expression then progressively disappears in the portal and hepatic veins, but the expression in sinusoidals endothelial cells (SECs) is retained and becomes stronger during development.

The protein resides in the cytoplasm. It localises to the cell membrane. Phosphatidylserine receptor that enhances the engulfment of apoptotic cells. Hyaluronan receptor that binds to and mediates endocytosis of hyaluronic acid (HA). Also acts, in different species, as a primary systemic scavenger receptor for heparin (Hep), chondroitin sulfate (CS), dermatan sulfate (DS), nonglycosaminoglycan (GAG), acetylated low-density lipoprotein (AcLDL), pro-collagen propeptides and advanced glycation end products (AGE). May serve to maintain tissue integrity by supporting extracellular matrix turnover or it may contribute to maintaining fluidity of bodily liquids by resorption of hyaluronan. Counter receptor which plays an important role in lymphocyte recruitment in the hepatic vasculature. Binds to both Gram-positive and Gram-negative bacteria and may play a role in defense against bacterial infection. The proteolytically processed 175 kDa form also functions as an endocytosis receptor for heparin internalization as well as HA and CS. The protein is Stabilin-2 of Rattus norvegicus (Rat).